We begin with the raw amino-acid sequence, 218 residues long: Small ribosomal subunit protein uS3 (218 aa).

The KH type-2 domain occupies 38-106; it reads IRDYVAKRLS…RVHINIVEIK (69 aa).

Belongs to the universal ribosomal protein uS3 family. As to quaternary structure, part of the 30S ribosomal subunit. Forms a tight complex with proteins S10 and S14.

Binds the lower part of the 30S subunit head. Binds mRNA in the 70S ribosome, positioning it for translation. In Listeria monocytogenes serotype 4b (strain F2365), this protein is Small ribosomal subunit protein uS3.